The primary structure comprises 331 residues: 4-hydroxythreonine-4-phosphate dehydrogenase (331 aa).

Substrate is bound by residues His137 and Thr138. His167, His212, and His267 together coordinate a divalent metal cation. Substrate contacts are provided by Lys275, Asn284, and Arg293.

Belongs to the PdxA family. Homodimer. Zn(2+) serves as cofactor. It depends on Mg(2+) as a cofactor. Co(2+) is required as a cofactor.

It is found in the cytoplasm. It carries out the reaction 4-(phosphooxy)-L-threonine + NAD(+) = 3-amino-2-oxopropyl phosphate + CO2 + NADH. It participates in cofactor biosynthesis; pyridoxine 5'-phosphate biosynthesis; pyridoxine 5'-phosphate from D-erythrose 4-phosphate: step 4/5. Its function is as follows. Catalyzes the NAD(P)-dependent oxidation of 4-(phosphooxy)-L-threonine (HTP) into 2-amino-3-oxo-4-(phosphooxy)butyric acid which spontaneously decarboxylates to form 3-amino-2-oxopropyl phosphate (AHAP). The protein is 4-hydroxythreonine-4-phosphate dehydrogenase of Yersinia enterocolitica serotype O:8 / biotype 1B (strain NCTC 13174 / 8081).